We begin with the raw amino-acid sequence, 141 residues long: MERTLAILKPDCVRKNLIGAAIEKIQSAGFKVVAMKMTRLTKETAGEFYAVHKARPFYGELVEFMSSGACVPLMLEKENAVADFRTLIGATDPAEAAEGTIRKLYADSKGENIVHGSDSVENAKIECGFFFSTQEAVANMA.

Residues Lys9, Phe57, Arg85, Thr91, Arg102, and Asn112 each contribute to the ATP site. His115 (pros-phosphohistidine intermediate) is an active-site residue.

It belongs to the NDK family. In terms of assembly, homotetramer. Mg(2+) serves as cofactor.

Its subcellular location is the cytoplasm. The catalysed reaction is a 2'-deoxyribonucleoside 5'-diphosphate + ATP = a 2'-deoxyribonucleoside 5'-triphosphate + ADP. The enzyme catalyses a ribonucleoside 5'-diphosphate + ATP = a ribonucleoside 5'-triphosphate + ADP. In terms of biological role, major role in the synthesis of nucleoside triphosphates other than ATP. The ATP gamma phosphate is transferred to the NDP beta phosphate via a ping-pong mechanism, using a phosphorylated active-site intermediate. The sequence is that of Nucleoside diphosphate kinase from Chloroherpeton thalassium (strain ATCC 35110 / GB-78).